A 277-amino-acid polypeptide reads, in one-letter code: 3-methyl-2-oxobutanoate hydroxymethyltransferase (277 aa).

Mg(2+) contacts are provided by Asp-43 and Asp-82. Residues Asp-43–Ser-44, Asp-82, and Lys-112 contribute to the 3-methyl-2-oxobutanoate site. Glu-114 contributes to the Mg(2+) binding site. Residue Glu-181 is the Proton acceptor of the active site.

This sequence belongs to the PanB family. Homodecamer; pentamer of dimers. Requires Mg(2+) as cofactor.

Its subcellular location is the cytoplasm. The catalysed reaction is 3-methyl-2-oxobutanoate + (6R)-5,10-methylene-5,6,7,8-tetrahydrofolate + H2O = 2-dehydropantoate + (6S)-5,6,7,8-tetrahydrofolate. It participates in cofactor biosynthesis; (R)-pantothenate biosynthesis; (R)-pantoate from 3-methyl-2-oxobutanoate: step 1/2. Its function is as follows. Catalyzes the reversible reaction in which hydroxymethyl group from 5,10-methylenetetrahydrofolate is transferred onto alpha-ketoisovalerate to form ketopantoate. The protein is 3-methyl-2-oxobutanoate hydroxymethyltransferase of Bacillus subtilis (strain 168).